The following is a 609-amino-acid chain: Proline--tRNA ligase (609 aa).

It belongs to the class-II aminoacyl-tRNA synthetase family. ProS type 1 subfamily. In terms of assembly, homodimer.

The protein localises to the cytoplasm. The enzyme catalyses tRNA(Pro) + L-proline + ATP = L-prolyl-tRNA(Pro) + AMP + diphosphate. Functionally, catalyzes the attachment of proline to tRNA(Pro) in a two-step reaction: proline is first activated by ATP to form Pro-AMP and then transferred to the acceptor end of tRNA(Pro). As ProRS can inadvertently accommodate and process non-cognate amino acids such as alanine and cysteine, to avoid such errors it has two additional distinct editing activities against alanine. One activity is designated as 'pretransfer' editing and involves the tRNA(Pro)-independent hydrolysis of activated Ala-AMP. The other activity is designated 'posttransfer' editing and involves deacylation of mischarged Ala-tRNA(Pro). The misacylated Cys-tRNA(Pro) is not edited by ProRS. In Synechococcus sp. (strain JA-2-3B'a(2-13)) (Cyanobacteria bacterium Yellowstone B-Prime), this protein is Proline--tRNA ligase.